Reading from the N-terminus, the 106-residue chain is Small cardioactive peptide-related peptide (106 aa).

Positions 1-20 are cleaved as a signal peptide; the sequence is MFCKHLSFVAITICFLLVLA. Positions 21–41 are cleaved as a propeptide — amino-terminal spacer peptide; sequence KTENEIQQKNIKFDQRTWRNM. Q52 is modified (glutamine amide). A propeptide spans 55–106 (carboxy-terminal spacer peptide); that stretch reads SDNQPDYTCCGMPLTKYVGICPIGMECCPGLKKVLQKSGQRTIYSVCVADAY.

Expression is seen in the peripheral and central nervous systems in tissues such as the brain, the inferior buccal ganglion, the gastric ganglion, the olfactory lobe, the peduncle lobe and the optic lobe. Expression in the brain is distributed in the median inferior frontal lobe, the superior buccal lobe, the prebranchial lobe and the pedal lobe. Not expressed in the vasomotor lobe or the palliovisceral lobe that controls the cardiac system.

It localises to the secreted. Its function is as follows. Evokes contractions in the radula protractor muscle, and may regulate feeding behavior and gut motility by controlling muscle contraction of the buccal mass. The chain is Small cardioactive peptide-related peptide from Octopus vulgaris (Common octopus).